The following is a 232-amino-acid chain: 5'-methylthioadenosine/S-adenosylhomocysteine nucleosidase (232 aa).

Glutamate 12 serves as the catalytic Proton acceptor. Residues glycine 78, isoleucine 152, and 173 to 174 (ME) each bind substrate. Aspartate 197 (proton donor) is an active-site residue.

The protein belongs to the PNP/UDP phosphorylase family. MtnN subfamily. In terms of assembly, homodimer.

It catalyses the reaction S-adenosyl-L-homocysteine + H2O = S-(5-deoxy-D-ribos-5-yl)-L-homocysteine + adenine. It carries out the reaction S-methyl-5'-thioadenosine + H2O = 5-(methylsulfanyl)-D-ribose + adenine. The enzyme catalyses 5'-deoxyadenosine + H2O = 5-deoxy-D-ribose + adenine. Its pathway is amino-acid biosynthesis; L-methionine biosynthesis via salvage pathway; S-methyl-5-thio-alpha-D-ribose 1-phosphate from S-methyl-5'-thioadenosine (hydrolase route): step 1/2. In terms of biological role, catalyzes the irreversible cleavage of the glycosidic bond in both 5'-methylthioadenosine (MTA) and S-adenosylhomocysteine (SAH/AdoHcy) to adenine and the corresponding thioribose, 5'-methylthioribose and S-ribosylhomocysteine, respectively. Also cleaves 5'-deoxyadenosine, a toxic by-product of radical S-adenosylmethionine (SAM) enzymes, into 5-deoxyribose and adenine. Thus, is required for in vivo function of the radical SAM enzymes biotin synthase and lipoic acid synthase, that are inhibited by 5'-deoxyadenosine accumulation. The sequence is that of 5'-methylthioadenosine/S-adenosylhomocysteine nucleosidase from Salmonella paratyphi B (strain ATCC BAA-1250 / SPB7).